Here is a 301-residue protein sequence, read N- to C-terminus: HTH-type transcriptional activator NagR (301 aa).

One can recognise an HTH lysR-type domain in the interval 6–63 (IDLNLLVVFNQLLLDRSVSTAGEKLGLTQPAVSNSLKRLRAALKDDLFLRTSKGMEPT). A DNA-binding region (H-T-H motif) is located at residues 23 to 42 (VSTAGEKLGLTQPAVSNSLK).

Belongs to the LysR transcriptional regulatory family.

Functionally, may regulate the expression of the naphthalene (nagA-F) and salicylate (nagG-M) metabolism genes. The protein is HTH-type transcriptional activator NagR of Ralstonia sp.